Reading from the N-terminus, the 802-residue chain is Oligophrenin-1 (802 aa).

In terms of domain architecture, PH spans 265-368 (QPTIEGYLYT…WMEAMDGKEP (104 aa)). Positions 380–564 (MELNEVGFKF…ILIEHFGKIY (185 aa)) constitute a Rho-GAP domain. Disordered stretches follow at residues 569–588 (EESA…RHKP), 607–666 (LDES…EPCP), 680–770 (GGTK…NAGE), and 783–802 (FETA…GDES). Residues 616-627 (HQTPNGTITSSI) are compositionally biased toward polar residues. Basic and acidic residues predominate over residues 716-732 (HHKEGDADSFSKVRPPG).

Interacts with HOMER1. Interacts with AMPA receptor complexes. Interacts with SH3GL2 (endophilin-A1). Interacts (via C-terminus) with NR1D1. Expressed in brain.

The protein localises to the postsynapse. It is found in the presynapse. The protein resides in the cell projection. It localises to the axon. Its subcellular location is the dendritic spine. The protein localises to the dendrite. It is found in the cytoplasm. Its function is as follows. Stimulates GTP hydrolysis of members of the Rho family. Its action on RHOA activity and signaling is implicated in growth and stabilization of dendritic spines, and therefore in synaptic function. Critical for the stabilization of AMPA receptors at postsynaptic sites. Critical for the regulation of synaptic vesicle endocytosis at presynaptic terminals. Required for the localization of NR1D1 to dendrites, can suppress its repressor activity and protect it from proteasomal degradation. This chain is Oligophrenin-1 (OPHN1), found in Homo sapiens (Human).